The chain runs to 448 residues: Phosphoglucosamine mutase (448 aa).

Ser-102 serves as the catalytic Phosphoserine intermediate. Ser-102, Asp-243, Asp-245, and Asp-247 together coordinate Mg(2+). Position 102 is a phosphoserine (Ser-102).

It belongs to the phosphohexose mutase family. Mg(2+) serves as cofactor. Activated by phosphorylation.

The enzyme catalyses alpha-D-glucosamine 1-phosphate = D-glucosamine 6-phosphate. Its function is as follows. Catalyzes the conversion of glucosamine-6-phosphate to glucosamine-1-phosphate. The sequence is that of Phosphoglucosamine mutase from Mycobacterium bovis (strain ATCC BAA-935 / AF2122/97).